Consider the following 265-residue polypeptide: 4-hydroxy-tetrahydrodipicolinate reductase (265 aa).

NAD(+) is bound by residues 7–12 and Asp-33; that span reads GASGRM. NADP(+) is bound at residue Arg-34. Residues 96 to 98 and 120 to 123 each bind NAD(+); these read GTT and AANM. His-153 acts as the Proton donor/acceptor in catalysis. His-154 contributes to the (S)-2,3,4,5-tetrahydrodipicolinate binding site. The active-site Proton donor is Lys-157. 163-164 is a binding site for (S)-2,3,4,5-tetrahydrodipicolinate; it reads GT.

Belongs to the DapB family.

It is found in the cytoplasm. It carries out the reaction (S)-2,3,4,5-tetrahydrodipicolinate + NAD(+) + H2O = (2S,4S)-4-hydroxy-2,3,4,5-tetrahydrodipicolinate + NADH + H(+). The enzyme catalyses (S)-2,3,4,5-tetrahydrodipicolinate + NADP(+) + H2O = (2S,4S)-4-hydroxy-2,3,4,5-tetrahydrodipicolinate + NADPH + H(+). The protein operates within amino-acid biosynthesis; L-lysine biosynthesis via DAP pathway; (S)-tetrahydrodipicolinate from L-aspartate: step 4/4. Its function is as follows. Catalyzes the conversion of 4-hydroxy-tetrahydrodipicolinate (HTPA) to tetrahydrodipicolinate. This chain is 4-hydroxy-tetrahydrodipicolinate reductase, found in Burkholderia cenocepacia (strain ATCC BAA-245 / DSM 16553 / LMG 16656 / NCTC 13227 / J2315 / CF5610) (Burkholderia cepacia (strain J2315)).